The following is a 448-amino-acid chain: uncharacterized protein (448 aa).

The residue at position 280 (K280) is an N6-(pyridoxal phosphate)lysine.

Belongs to the class-III pyridoxal-phosphate-dependent aminotransferase family.

It is found in the cytoplasm. The protein resides in the mitochondrion. This is an uncharacterized protein from Schizosaccharomyces pombe (strain 972 / ATCC 24843) (Fission yeast).